The following is a 288-amino-acid chain: Transmembrane and coiled-coil domain-containing protein 5A (288 aa).

A coiled-coil region spans residues 13 to 105; the sequence is IISLNMDLER…VHSISELQRK (93 aa). Residues 227 to 249 traverse the membrane as a helical segment; it reads SLLFSTLFFIRLLGYLIFHLSFI.

In terms of tissue distribution, testis-specific. Expressed in spermatogenic cells of testis but disappear by the time mature spermatozoa are formed (at protein level).

Its subcellular location is the endoplasmic reticulum membrane. The protein resides in the nucleus membrane. The polypeptide is Transmembrane and coiled-coil domain-containing protein 5A (Tmco5a) (Rattus norvegicus (Rat)).